A 492-amino-acid polypeptide reads, in one-letter code: Membrane-bound glycerophospholipid O-acyltransferase 1 (492 aa).

6 helical membrane passes run 33–53 (VNFV…RIYL), 69–89 (ILGI…LFVL), 125–145 (IYIF…MIVT), 179–199 (PSLL…AGPC), 237–257 (MGAV…FLTL), and 296–316 (YFAW…FNGM). Active-site residues include Asn349 and His380. 3 helical membrane-spanning segments follow: residues 370–390 (VLTF…YFTF), 423–443 (VVTW…FVML), and 452–472 (YKSV…FLPI). Position 486 is a phosphoserine (Ser486).

Belongs to the membrane-bound acyltransferase family. Highly expressed in stomach, epididymis, and colon.

Its subcellular location is the endoplasmic reticulum membrane. The enzyme catalyses a 1-acyl-sn-glycero-3-phosphoethanolamine + an acyl-CoA = a 1,2-diacyl-sn-glycero-3-phosphoethanolamine + CoA. It carries out the reaction a 1-acyl-sn-glycero-3-phospho-L-serine + an acyl-CoA = a 1,2-diacyl-sn-glycero-3-phospho-L-serine + CoA. It catalyses the reaction a 1-acyl-sn-glycero-3-phosphocholine + an acyl-CoA = a 1,2-diacyl-sn-glycero-3-phosphocholine + CoA. The catalysed reaction is a 1-O-(1Z-alkenyl)-sn-glycero-3-phosphoethanolamine + (9Z)-octadecenoyl-CoA = 1-O-(1Z)-alkenyl-2-(9Z)-octadecenoyl-sn-glycero-3-phosphoethanolamine + CoA. The enzyme catalyses 1-octadecanoyl-sn-glycero-3-phosphoethanolamine + (9Z)-octadecenoyl-CoA = 1-octadecanoyl-2-(9Z-octadecenoyl)-sn-glycero-3-phosphoethanolamine + CoA. It carries out the reaction 1-(9Z-octadecenoyl)-sn-glycero-3-phospho-L-serine + (9Z)-octadecenoyl-CoA = 1,2-di-(9Z)-octadecenoyl-sn-glycero-3-phospho-L-serine + CoA. It catalyses the reaction 1-(9Z-octadecenoyl)-sn-glycero-3-phosphoethanolamine + (9Z)-octadecenoyl-CoA = 1,2-di-(9Z-octadecenoyl)-sn-glycero-3-phosphoethanolamine + CoA. The catalysed reaction is 1-hexadecanoyl-sn-glycero-3-phosphoethanolamine + (9Z)-octadecenoyl-CoA = 1-hexadecanoyl-2-(9Z-octadecenoyl)-sn-glycero-3-phosphoethanolamine + CoA. The enzyme catalyses 1-(10Z-heptadecenoyl)-sn-glycero-3-phosphoethanolamine + hexadecanoyl-CoA = 1-(10Z-heptadecenoyl)-2-hexadecanoyl-sn-glycero-3-phosphoethanolamine + CoA. It carries out the reaction 1-(9Z-octadecenoyl)-sn-glycero-3-phospho-L-serine + octadecanoyl-CoA = 1-(9Z-octadecenoyl)-2-octadecanoyl-sn-glycero-3-phospho-L-serine + CoA. It catalyses the reaction 1-(9Z-octadecenoyl)-sn-glycero-3-phospho-L-serine + (9Z)-hexadecenoyl-CoA = 1-(9Z-octadecenoyl)-2-(9Z-hexadecenoyl)-sn-glycero-3-phospho-L-serine + CoA. The catalysed reaction is 1-(9Z-octadecenoyl)-sn-glycero-3-phospho-L-serine + (9Z,12Z)-octadecadienoyl-CoA = 1-(9Z-octadecenoyl)-2-(9Z,12Z-octadienoyl)-sn-glycero-3-phospho-L-serine + CoA. The enzyme catalyses 1-hexadecanoyl-sn-glycero-3-phosphocholine + (9Z)-octadecenoyl-CoA = 1-hexadecanoyl-2-(9Z-octadecenoyl)-sn-glycero-3-phosphocholine + CoA. It carries out the reaction 1-(10Z-heptadecenoyl)-sn-glycero-3-phosphoethanolamine + (9Z)-octadecenoyl-CoA = 1-(10Z-heptadecenoyl)-2-(9Z-octadecenoyl)-sn-glycero-3-phosphoethanolamine + CoA. The protein operates within lipid metabolism; phospholipid metabolism. In terms of biological role, acyltransferase which catalyzes the transfer of an acyl group from an acyl-CoA towards a lysophospholipid producing a phospholipid and participates in the reacylation step of the phospholipid remodeling pathway also known as the Lands cycle. Acts on lysophosphatidylserine (1-acyl-2-hydroxy-sn-glycero-3-phospho-L-serine or LPS) and lysophosphatidylethanolamine (1-acyl-sn-glycero-3-phosphoethanolamine or LPE), and to a lesser extend lysophosphatidylcholine. Prefers oleoyl-CoA as the acyl donor and 1-oleoyl-LPE as acceptor. May play a role in neurite outgrowth during neuronal differentiation. This chain is Membrane-bound glycerophospholipid O-acyltransferase 1, found in Mus musculus (Mouse).